The primary structure comprises 549 residues: Probable protein kinase UbiB (549 aa).

The Protein kinase domain occupies 123-501 (DFNETPLASA…QQQAHKSNYL (379 aa)). Residues 129–137 (LASASISQV) and K152 contribute to the ATP site. The active-site Proton acceptor is the D287. The next 2 helical transmembrane spans lie at 496-516 (HKSNYLLITSAVLLICGTLLI) and 520-540 (ATLWTPYVCLVSGIILWFVGW).

This sequence belongs to the ABC1 family. UbiB subfamily.

The protein localises to the cell inner membrane. It participates in cofactor biosynthesis; ubiquinone biosynthesis [regulation]. Functionally, is probably a protein kinase regulator of UbiI activity which is involved in aerobic coenzyme Q (ubiquinone) biosynthesis. The protein is Probable protein kinase UbiB of Shewanella baltica (strain OS185).